The primary structure comprises 76 residues: uncharacterized protein (76 aa).

It is found in the plastid. This is an uncharacterized protein from Euglena longa (Euglenophycean alga).